Consider the following 239-residue polypeptide: Probable methylthioribulose-1-phosphate dehydratase (239 aa).

Cys100 lines the substrate pocket. Positions 118 and 120 each coordinate Zn(2+). Residue Glu141 is the Proton donor/acceptor of the active site. His197 lines the Zn(2+) pocket.

This sequence belongs to the aldolase class II family. MtnB subfamily. It depends on Zn(2+) as a cofactor.

It is found in the cytoplasm. It carries out the reaction 5-(methylsulfanyl)-D-ribulose 1-phosphate = 5-methylsulfanyl-2,3-dioxopentyl phosphate + H2O. Its pathway is amino-acid biosynthesis; L-methionine biosynthesis via salvage pathway; L-methionine from S-methyl-5-thio-alpha-D-ribose 1-phosphate: step 2/6. Its function is as follows. Catalyzes the dehydration of methylthioribulose-1-phosphate (MTRu-1-P) into 2,3-diketo-5-methylthiopentyl-1-phosphate (DK-MTP-1-P). The protein is Probable methylthioribulose-1-phosphate dehydratase of Leishmania major.